A 182-amino-acid chain; its full sequence is Ribosome maturation factor RimP (182 aa).

Belongs to the RimP family.

The protein localises to the cytoplasm. In terms of biological role, required for maturation of 30S ribosomal subunits. The chain is Ribosome maturation factor RimP from Chloroherpeton thalassium (strain ATCC 35110 / GB-78).